A 276-amino-acid polypeptide reads, in one-letter code: NADPH-dependent 7-cyano-7-deazaguanine reductase (276 aa).

Residue 83-85 (IES) participates in substrate binding. 85-86 (SK) provides a ligand contact to NADPH. Cysteine 184 functions as the Thioimide intermediate in the catalytic mechanism. The active-site Proton donor is aspartate 191. 223–224 (HE) is a substrate binding site. 252–253 (RG) serves as a coordination point for NADPH.

Belongs to the GTP cyclohydrolase I family. QueF type 2 subfamily. As to quaternary structure, homodimer.

Its subcellular location is the cytoplasm. The catalysed reaction is 7-aminomethyl-7-carbaguanine + 2 NADP(+) = 7-cyano-7-deazaguanine + 2 NADPH + 3 H(+). It participates in tRNA modification; tRNA-queuosine biosynthesis. In terms of biological role, catalyzes the NADPH-dependent reduction of 7-cyano-7-deazaguanine (preQ0) to 7-aminomethyl-7-deazaguanine (preQ1). This Desulfotalea psychrophila (strain LSv54 / DSM 12343) protein is NADPH-dependent 7-cyano-7-deazaguanine reductase.